Consider the following 177-residue polypeptide: 3-hydroxydecanoyl-[acyl-carrier-protein] dehydratase (177 aa).

His-76 is a catalytic residue.

It belongs to the thioester dehydratase family. FabA subfamily. Homodimer.

Its subcellular location is the cytoplasm. The enzyme catalyses a (3R)-hydroxyacyl-[ACP] = a (2E)-enoyl-[ACP] + H2O. The catalysed reaction is (3R)-hydroxydecanoyl-[ACP] = (2E)-decenoyl-[ACP] + H2O. It catalyses the reaction (2E)-decenoyl-[ACP] = (3Z)-decenoyl-[ACP]. It functions in the pathway lipid metabolism; fatty acid biosynthesis. Its function is as follows. Necessary for the introduction of cis unsaturation into fatty acids. Catalyzes the dehydration of (3R)-3-hydroxydecanoyl-ACP to E-(2)-decenoyl-ACP and then its isomerization to Z-(3)-decenoyl-ACP. Can catalyze the dehydratase reaction for beta-hydroxyacyl-ACPs with saturated chain lengths up to 16:0, being most active on intermediate chain length. In Haemophilus influenzae (strain PittGG), this protein is 3-hydroxydecanoyl-[acyl-carrier-protein] dehydratase.